Consider the following 480-residue polypeptide: LETM1 domain-containing protein LETM2, mitochondrial (480 aa).

The transit peptide at 1–25 directs the protein to the mitochondrion; that stretch reads MAFYSYNSFLAIFWTRLPGHSVYPS. Residues 26–175 lie on the Mitochondrial intermembrane side of the membrane; sequence CSHFPSLAFL…LLRTCADVFR (150 aa). The interval 88–118 is disordered; it reads GKPQLEQTGKPKAASPQPTKEAKTETTEEKR. Basic and acidic residues predominate over residues 107–118; sequence KEAKTETTEEKR. Residues 176–196 form a helical membrane-spanning segment; sequence LVPFMVFIIVPFMEFLIPVFL. Over 197 to 480 the chain is Mitochondrial matrix; that stretch reads KLFPDMLPST…QNSKADSKGA (284 aa). A Letm1 RBD domain is found at 219 to 436; sequence KTMAAKLEIA…SAPQLKGTKD (218 aa). The interval 398 to 444 is disordered; sequence ELPPNIETPKPNLGIPTPPPPESKENLTDSAPQLKGTKDEEFIQLPP.

The protein resides in the mitochondrion inner membrane. The sequence is that of LETM1 domain-containing protein LETM2, mitochondrial (Letm2) from Mus musculus (Mouse).